We begin with the raw amino-acid sequence, 92 residues long: DNA-directed RNA polymerase subunit Rpo11 (92 aa).

Belongs to the archaeal Rpo11/eukaryotic RPB11/RPC19 RNA polymerase subunit family. As to quaternary structure, part of the RNA polymerase complex.

The protein localises to the cytoplasm. It carries out the reaction RNA(n) + a ribonucleoside 5'-triphosphate = RNA(n+1) + diphosphate. Functionally, DNA-dependent RNA polymerase (RNAP) catalyzes the transcription of DNA into RNA using the four ribonucleoside triphosphates as substrates. The protein is DNA-directed RNA polymerase subunit Rpo11 of Methanosarcina barkeri (strain Fusaro / DSM 804).